Here is a 193-residue protein sequence, read N- to C-terminus: Large ribosomal subunit protein uL5 (193 aa).

It belongs to the universal ribosomal protein uL5 family. In terms of assembly, part of the 50S ribosomal subunit; part of the 5S rRNA/L5/L18/L25 subcomplex. Contacts the 5S rRNA and the P site tRNA. Forms a bridge to the 30S subunit in the 70S ribosome.

Its function is as follows. This is one of the proteins that bind and probably mediate the attachment of the 5S RNA into the large ribosomal subunit, where it forms part of the central protuberance. In the 70S ribosome it contacts protein S13 of the 30S subunit (bridge B1b), connecting the 2 subunits; this bridge is implicated in subunit movement. Contacts the P site tRNA; the 5S rRNA and some of its associated proteins might help stabilize positioning of ribosome-bound tRNAs. This is Large ribosomal subunit protein uL5 from Renibacterium salmoninarum (strain ATCC 33209 / DSM 20767 / JCM 11484 / NBRC 15589 / NCIMB 2235).